Reading from the N-terminus, the 361-residue chain is tRNA-specific 2-thiouridylase MnmA (361 aa).

ATP-binding positions include 6–13 (AMSGGVDS) and leucine 32. Catalysis depends on cysteine 99, which acts as the Nucleophile. Cysteine 99 and cysteine 196 are oxidised to a cystine. Residue glycine 123 participates in ATP binding. Residues 145–147 (RDQ) are interaction with tRNA. Cysteine 196 functions as the Cysteine persulfide intermediate in the catalytic mechanism.

It belongs to the MnmA/TRMU family.

It localises to the cytoplasm. The enzyme catalyses S-sulfanyl-L-cysteinyl-[protein] + uridine(34) in tRNA + AH2 + ATP = 2-thiouridine(34) in tRNA + L-cysteinyl-[protein] + A + AMP + diphosphate + H(+). Its function is as follows. Catalyzes the 2-thiolation of uridine at the wobble position (U34) of tRNA, leading to the formation of s(2)U34. The sequence is that of tRNA-specific 2-thiouridylase MnmA from Gluconobacter oxydans (strain 621H) (Gluconobacter suboxydans).